The chain runs to 611 residues: Histone acetyltransferase KAT7 (611 aa).

A disordered region spans residues 1-173 (MPRRKRNAGS…SDLSHRPKRR (173 aa)). Phosphoserine is present on Ser10. A compositionally biased stretch (low complexity) spans 42 to 57 (VTRSSARLSQSSQDSS). Ser50 and Ser53 each carry phosphoserine; by ATR. Ser57 is subject to Phosphoserine; by PLK1. Phosphoserine is present on Ser64. Residues Thr85 and Thr88 each carry the phosphothreonine; by CDK1 modification. The span at 96 to 105 (QTRSSGSETE) shows a compositional bias: polar residues. Phosphoserine is present on Ser102. At Thr104 the chain carries Phosphothreonine. Residues 110–125 (FSDRETKNTADHDESP) show a composition bias toward basic and acidic residues. 2 positions are modified to phosphoserine: Ser111 and Ser124. A Phosphothreonine modification is found at Thr128. The segment covering 134 to 145 (PSSESDIDISSP) has biased composition (low complexity). Positions 148 to 168 (SHDESIAKDMSLKDSGSDLSH) are enriched in basic and acidic residues. 4 positions are modified to phosphoserine: Ser158, Ser162, Ser164, and Ser178. The CCHHC-type zinc finger occupies 176–219 (HESYNFNMKCPTPGCNSLGHLTGKHERHFSISGCPLYHNLSADE). An N6-acetyllysine mark is found at Lys199 and Lys277. A Glycyl lysine isopeptide (Lys-Gly) (interchain with G-Cter in SUMO2) cross-link involves residue Lys323. The MYST-type HAT domain occupies 332-607 (EGSNMIKTIA…MDPSCLKWTP (276 aa)). Residue Lys338 forms a Glycyl lysine isopeptide (Lys-Gly) (interchain with G-Cter in ubiquitin) linkage. A C2HC MYST-type zinc finger spans residues 365-390 (LYMCEFCLKYMKSQTILRRHMAKCVW). Cys368, Cys371, His384, and Cys388 together coordinate Zn(2+). Lys432 carries the post-translational modification N6-acetyllysine; by autocatalysis. Acetyl-CoA-binding positions include 475–477 (ILT) and 483–488 (RQGYGK). Residue Ser506 is modified to Phosphoserine. Residue Glu508 is the Proton donor/acceptor of the active site. Residues Ser512 and Ser521 each contribute to the acetyl-CoA site.

Belongs to the MYST (SAS/MOZ) family. As to quaternary structure, component of the HBO1 complex composed of KAT7/HBO1, MEAF6, ING4 or ING5, and one scaffold subunit: complexes containing BRPF scaffold (BRPF1, BRD1/BRPF2 or BRPF3) direct KAT7/HBO1 specificity towards H3K14ac, while complexes containing JADE scaffold (JADE1, JADE2 and JADE3) mediate acetylation of histone H4. Interacts with MCM2 and ORC1. Interacts with the androgen receptor (AR); in the presence of dihydrotestosterone. Interacts with CDT1. Interacts with MAP2K1 and CUL1. Interacts with p53/TP53; leading to inhibit histone acetyltransferase activity. Interacts with MIS18BP1. Post-translationally, phosphorylated at Ser-50 and Ser-53 by ATR in response to DNA damage, promoting its ubiquitination by the CRL4(DDB2) complex and subsequent degradation. Phosphorylation at Ser-50 and Ser-53 by ATR in response to ultraviolet-induced DNA, promotes localization to DNA damage sites. Phosphorylation at Ser-57 by PLK1 during mitosis seems important for prereplicative complex formation and DNA replication licensing, and requires prior phosphorylation at Thr-85 and Thr-88 by CDK1. Phosphorylated by MAP2K1, which accelerates its degradation. In terms of processing, ubiquitinated at Lys-338, leading to proteasomal degradation. Ubiquitinated by the CRL4(DDB2) complex following phosphorylation by ATR, leading to its subsequent degradation. Autoacetylation at Lys-432 is required for proper function. Ubiquitously expressed, with highest levels in testis.

The protein localises to the nucleus. Its subcellular location is the chromosome. It localises to the centromere. It is found in the cytoplasm. The protein resides in the cytosol. The enzyme catalyses L-lysyl-[histone] + acetyl-CoA = N(6)-acetyl-L-lysyl-[histone] + CoA + H(+). Its activity is regulated as follows. Histone acetyltransferase activity is inhibited by GMNN in the context of a complex with CDT1, inhibiting histone H4 acetylation and DNA replication licensing. Selectively inhibited by WM-3835 (N'-(4-fluoro-5-methyl-[1,1'-biphenyl]-3-carbonyl)-3- hydroxybenzenesulfonohydrazide) inhibitor. Its function is as follows. Catalytic subunit of histone acetyltransferase HBO1 complexes, which specifically mediate acetylation of histone H3 at 'Lys-14' (H3K14ac), thereby regulating various processes, such as gene transcription, protein ubiquitination, immune regulation, stem cell pluripotent and self-renewal maintenance and embryonic development. Some complexes also catalyze acetylation of histone H4 at 'Lys-5', 'Lys-8' and 'Lys-12' (H4K5ac, H4K8ac and H4K12ac, respectively), regulating DNA replication initiation, regulating DNA replication initiation. Specificity of the HBO1 complexes is determined by the scaffold subunit: complexes containing BRPF scaffold (BRPF1, BRD1/BRPF2 or BRPF3) direct KAT7/HBO1 specificity towards H3K14ac, while complexes containing JADE (JADE1, JADE2 and JADE3) scaffold direct KAT7/HBO1 specificity towards histone H4. H3K14ac promotes transcriptional elongation by facilitating the processivity of RNA polymerase II. Acts as a key regulator of hematopoiesis by forming a complex with BRD1/BRPF2, directing KAT7/HBO1 specificity towards H3K14ac and promoting erythroid differentiation. H3K14ac is also required for T-cell development. KAT7/HBO1-mediated acetylation facilitates two consecutive steps, licensing and activation, in DNA replication initiation: H3K14ac facilitates the activation of replication origins, and histone H4 acetylation (H4K5ac, H4K8ac and H4K12ac) facilitates chromatin loading of MCM complexes, promoting DNA replication licensing. Acts as a positive regulator of centromeric CENPA assembly: recruited to centromeres and mediates histone acetylation, thereby preventing centromere inactivation mediated by SUV39H1, possibly by increasing histone turnover/exchange. Involved in nucleotide excision repair: phosphorylation by ATR in response to ultraviolet irradiation promotes its localization to DNA damage sites, where it mediates histone acetylation to facilitate recruitment of XPC at the damaged DNA sites. Acts as an inhibitor of NF-kappa-B independently of its histone acetyltransferase activity. Plays a central role in the maintenance of leukemia stem cells in acute myeloid leukemia (AML). Acts by mediating acetylation of histone H3 at 'Lys-14' (H3K14ac), thereby facilitating the processivity of RNA polymerase II to maintain the high expression of key genes, such as HOXA9 and HOXA10 that help to sustain the functional properties of leukemia stem cells. The protein is Histone acetyltransferase KAT7 of Homo sapiens (Human).